Consider the following 131-residue polypeptide: Fluoride-specific ion channel FluC 1 (131 aa).

4 helical membrane-spanning segments follow: residues 4–24 (LALPAWQASLVAIGAVPGAWL), 40–60 (HWGTFAVNMVAAFALGLVLAL), 73–93 (LILLIGVGFFGSLSTFSTFAV), and 108–128 (LVLAVGSILGGLLAVAAGVGL). Na(+) is bound by residues Gly83 and Ser86.

Belongs to the fluoride channel Fluc/FEX (TC 1.A.43) family.

It is found in the cell inner membrane. The enzyme catalyses fluoride(in) = fluoride(out). Na(+) is not transported, but it plays an essential structural role and its presence is essential for fluoride channel function. Functionally, fluoride-specific ion channel. Important for reducing fluoride concentration in the cell, thus reducing its toxicity. The protein is Fluoride-specific ion channel FluC 1 of Prochlorococcus marinus (strain MIT 9313).